A 457-amino-acid chain; its full sequence is tRNA-2-methylthio-N(6)-dimethylallyladenosine synthase (457 aa).

Residues 2-119 (KKVFIKTFGC…LPELIDARRR (118 aa)) form the MTTase N-terminal domain. Residues C11, C48, C82, C156, C160, and C163 each coordinate [4Fe-4S] cluster. The 234-residue stretch at 142-375 (RVEGPSAFVS…QATIDANMAR (234 aa)) folds into the Radical SAM core domain. The TRAM domain maps to 378–448 (EGMVGSVQRI…PHSLRGDVVE (71 aa)).

It belongs to the methylthiotransferase family. MiaB subfamily. Monomer. [4Fe-4S] cluster is required as a cofactor.

It localises to the cytoplasm. It carries out the reaction N(6)-dimethylallyladenosine(37) in tRNA + (sulfur carrier)-SH + AH2 + 2 S-adenosyl-L-methionine = 2-methylsulfanyl-N(6)-dimethylallyladenosine(37) in tRNA + (sulfur carrier)-H + 5'-deoxyadenosine + L-methionine + A + S-adenosyl-L-homocysteine + 2 H(+). Its function is as follows. Catalyzes the methylthiolation of N6-(dimethylallyl)adenosine (i(6)A), leading to the formation of 2-methylthio-N6-(dimethylallyl)adenosine (ms(2)i(6)A) at position 37 in tRNAs that read codons beginning with uridine. In Ralstonia nicotianae (strain ATCC BAA-1114 / GMI1000) (Ralstonia solanacearum), this protein is tRNA-2-methylthio-N(6)-dimethylallyladenosine synthase.